The chain runs to 249 residues: Proteasome subunit alpha (249 aa).

This sequence belongs to the peptidase T1A family. As to quaternary structure, the 20S proteasome core is composed of 14 alpha and 14 beta subunits that assemble into four stacked heptameric rings, resulting in a barrel-shaped structure. The two inner rings, each composed of seven catalytic beta subunits, are sandwiched by two outer rings, each composed of seven alpha subunits. The catalytic chamber with the active sites is on the inside of the barrel. Has a gated structure, the ends of the cylinder being occluded by the N-termini of the alpha-subunits. Is capped at one or both ends by the proteasome regulatory ATPase, PAN.

Its subcellular location is the cytoplasm. Its activity is regulated as follows. The formation of the proteasomal ATPase PAN-20S proteasome complex, via the docking of the C-termini of PAN into the intersubunit pockets in the alpha-rings, triggers opening of the gate for substrate entry. Interconversion between the open-gate and close-gate conformations leads to a dynamic regulation of the 20S proteasome proteolysis activity. Functionally, component of the proteasome core, a large protease complex with broad specificity involved in protein degradation. This chain is Proteasome subunit alpha, found in Methanosarcina mazei (strain ATCC BAA-159 / DSM 3647 / Goe1 / Go1 / JCM 11833 / OCM 88) (Methanosarcina frisia).